An 81-amino-acid polypeptide reads, in one-letter code: Small ribosomal subunit protein bS18 (81 aa).

Belongs to the bacterial ribosomal protein bS18 family. In terms of assembly, part of the 30S ribosomal subunit. Forms a tight heterodimer with protein bS6.

Binds as a heterodimer with protein bS6 to the central domain of the 16S rRNA, where it helps stabilize the platform of the 30S subunit. The protein is Small ribosomal subunit protein bS18 of Chlamydia trachomatis serovar L2 (strain ATCC VR-902B / DSM 19102 / 434/Bu).